The following is a 547-amino-acid chain: Chaperonin GroEL (547 aa).

ATP contacts are provided by residues 30 to 33 (TLGP), 87 to 91 (DGTTT), Gly414, 478 to 480 (DAL), and Asp494.

It belongs to the chaperonin (HSP60) family. In terms of assembly, forms a cylinder of 14 subunits composed of two heptameric rings stacked back-to-back. Interacts with the co-chaperonin GroES.

The protein resides in the cytoplasm. The enzyme catalyses ATP + H2O + a folded polypeptide = ADP + phosphate + an unfolded polypeptide.. Its function is as follows. Together with its co-chaperonin GroES, plays an essential role in assisting protein folding. The GroEL-GroES system forms a nano-cage that allows encapsulation of the non-native substrate proteins and provides a physical environment optimized to promote and accelerate protein folding. The chain is Chaperonin GroEL from Desulforudis audaxviator (strain MP104C).